The sequence spans 178 residues: Nucleoside-triphosphatase THEP1 (178 aa).

ATP contacts are provided by residues 7-14 (GEPGVGKT) and 102-109 (VIIIDEIG).

This sequence belongs to the THEP1 NTPase family. Monomer.

The enzyme catalyses a ribonucleoside 5'-triphosphate + H2O = a ribonucleoside 5'-diphosphate + phosphate + H(+). Its function is as follows. Has nucleotide phosphatase activity towards ATP, GTP, CTP, TTP and UTP. May hydrolyze nucleoside diphosphates with lower efficiency. Does not have kinase activity. This chain is Nucleoside-triphosphatase THEP1, found in Aquifex aeolicus (strain VF5).